The following is a 941-amino-acid chain: Coiled-coil and C2 domain-containing protein 1A (941 aa).

The residue at position 91 (threonine 91) is a Phosphothreonine. 2 disordered regions span residues 183–248 (TINE…PCSP) and 301–336 (SRLPPPPDQLSPEPPLPAAQPVTPASTLTRPEVPQP). Polar residues predominate over residues 228 to 239 (APSTTAQTSAKP). Serine 247 carries the phosphoserine modification. The segment covering 303 to 318 (LPPPPDQLSPEPPLPA) has biased composition (pro residues). A coiled-coil region spans residues 338 to 384 (KNLLEALEQRMERYHVAAAQAKAKGDQRKARMHERIVKQYQDAIRAH). The disordered stretch occupies residues 428 to 482 (ANHEEGSDEEEEETPKKNTPAASTAQPKASPSRAPPSGPAPAGKAASKGTSTRAQ). Serine 434 carries the phosphoserine modification. Positions 467-476 (APAGKAASKG) are enriched in low complexity. Positions 475-508 (KGTSTRAQQQLAFLEGRKKQLLQAALRAKQKNDV) form a coiled coil. The region spanning 628–762 (RFEQRTFSVI…ETACEVHEIL (135 aa)) is the C2 domain.

Belongs to the CC2D1 family. In terms of tissue distribution, strongly expressed in several brain areas including frontal cortex, cortex, mesencephalon, hippocampus, midbrain and hypothalamus. Also expressed in testis and at low levels in pituitary, liver and kidney. In brain the highest levels are detected in hippocampal pyramidal cells and raphe nuclei.

The protein resides in the cytoplasm. It is found in the nucleus. The protein localises to the cytoskeleton. Its subcellular location is the microtubule organizing center. It localises to the centrosome. In terms of biological role, transcription factor that binds specifically to the DRE (dual repressor element) and represses 5-HT1A gene transcription though this element. Mediates HDAC-independent repression of HTR1A promoter. CAMK2G inhibits CC2D1a-induced repression of the HTR1A. May play a role in the altered regulation of 5-HT1A receptors associated with anxiety and major depression. Performs essential function in controlling functional maturation of synapses. The protein is Coiled-coil and C2 domain-containing protein 1A (Cc2d1a) of Rattus norvegicus (Rat).